Reading from the N-terminus, the 172-residue chain is Probable calcium-binding protein CML28 (172 aa).

4 EF-hand domains span residues 1–36 (MDST…FGIF), 37–72 (IPDD…ILGD), 95–130 (DEDE…LGLK), and 133–168 (RTAD…GGFA). Ca(2+) is bound by residues Asp14, Asn16, Asp18, Arg20, Glu25, Asp50, Asn52, Asp54, Cys56, Glu61, Asp108, Asn110, Asp112, Glu119, Asp146, Asp148, Asp150, Arg152, and Glu157.

Functionally, potential calcium sensor. This is Probable calcium-binding protein CML28 (CML28) from Oryza sativa subsp. japonica (Rice).